A 172-amino-acid polypeptide reads, in one-letter code: Ribosome maturation factor RimM (172 aa).

The PRC barrel domain occupies 98 to 171 (PGEYYYHQIV…KVIVELMEGL (74 aa)).

It belongs to the RimM family. Binds ribosomal protein uS19.

Its subcellular location is the cytoplasm. Functionally, an accessory protein needed during the final step in the assembly of 30S ribosomal subunit, possibly for assembly of the head region. Essential for efficient processing of 16S rRNA. May be needed both before and after RbfA during the maturation of 16S rRNA. It has affinity for free ribosomal 30S subunits but not for 70S ribosomes. This is Ribosome maturation factor RimM from Levilactobacillus brevis (strain ATCC 367 / BCRC 12310 / CIP 105137 / JCM 1170 / LMG 11437 / NCIMB 947 / NCTC 947) (Lactobacillus brevis).